The sequence spans 218 residues: Large ribosomal subunit protein uL4 (218 aa).

The segment at 55–83 (THATKTRGMVSGGGKKPWKQKGTGRARQG) is disordered.

The protein belongs to the universal ribosomal protein uL4 family. In terms of assembly, part of the 50S ribosomal subunit.

Its function is as follows. One of the primary rRNA binding proteins, this protein initially binds near the 5'-end of the 23S rRNA. It is important during the early stages of 50S assembly. It makes multiple contacts with different domains of the 23S rRNA in the assembled 50S subunit and ribosome. Forms part of the polypeptide exit tunnel. The sequence is that of Large ribosomal subunit protein uL4 from Bifidobacterium longum (strain DJO10A).